The following is a 136-amino-acid chain: Nucleoside diphosphate kinase (136 aa).

The ATP site is built by Lys10, Phe58, Arg86, Thr92, Arg104, and Asn114. The Pros-phosphohistidine intermediate role is filled by His117.

Belongs to the NDK family. Homotetramer. The cofactor is Mg(2+).

It is found in the cytoplasm. The enzyme catalyses a 2'-deoxyribonucleoside 5'-diphosphate + ATP = a 2'-deoxyribonucleoside 5'-triphosphate + ADP. The catalysed reaction is a ribonucleoside 5'-diphosphate + ATP = a ribonucleoside 5'-triphosphate + ADP. Its function is as follows. Major role in the synthesis of nucleoside triphosphates other than ATP. The ATP gamma phosphate is transferred to the NDP beta phosphate via a ping-pong mechanism, using a phosphorylated active-site intermediate. In Mycobacterium marinum (strain ATCC BAA-535 / M), this protein is Nucleoside diphosphate kinase.